The chain runs to 146 residues: Hemoglobin subunit beta-2 (146 aa).

Positions 2–146 (EWTDFERATI…VVSSLGRQYH (145 aa)) constitute a Globin domain. Heme b-binding residues include histidine 63 and histidine 92.

The protein belongs to the globin family. Hb 2 is a heterotetramer of two alpha-2 and two beta-2 chains. As to expression, red blood cells.

Involved in oxygen transport from gills to the various peripheral tissues. The sequence is that of Hemoglobin subunit beta-2 (hbb2) from Gobionotothen gibberifrons (Humped rockcod).